We begin with the raw amino-acid sequence, 245 residues long: Lytic switch protein BZLF1 (245 aa).

The tract at residues 1 to 167 (MMDPNSTSED…RTRKPQQPES (167 aa)) is transactivation. Residues T14 and T159 each carry the phosphothreonine; by host modification. The Bipartite nuclear localization signal signature appears at 157–194 (RRTRKPQQPESLEECDSELEIKRYKNRVASRKCRAKFK). S167, S173, and S186 each carry phosphoserine; by host. In terms of domain architecture, bZIP spans 170–228 (ECDSELEIKRYKNRVASRKCRAKFKQLLQHYREVAAAKSSENDRLRLLLKQMCPSLDVD). The basic motif stretch occupies residues 178 to 195 (KRYKNRVASRKCRAKFKQ). The leucine-zipper stretch occupies residues 196-228 (LLQHYREVAAAKSSENDRLRLLLKQMCPSLDVD). Residues 229-245 (SIIPRTPDVLHEDLLNF) are accessory activation domain.

It belongs to the bZIP family. Homodimer. Interacts (via b-ZIP domain) with the DNA polymerase processivity factor BMRF1 (via N-terminus); this interaction may inhibit BZLF1-induced transcription of the BMRF1 promoter. Interacts with human UBN1, CRTC2 and RACK1. Interacts (via N-terminus) with human PAX5 (via N-terminus); this interaction inhibits BZLF1-mediated lytic viral reactivation. Interacts (via leucine-zipper domain) with host CEBPA; this interaction induces G1 host cell cycle arrest. Interacts (via C-terminus) with host TP53BP1 (via C-terminus); this interaction is involved in the activation of the viral lytic cycle. Interacts with host chromatin-remodeling ATPase INO80; this interaction participates to the activation of early lytic viral genes by BZLF1. Interacts with host regulator of chromatin SMARCA5/hSNF2H; this interaction participates to the activation of early lytic viral genes by BZLF1. Interacts with host PLSCR1/Phospholipid scramblase 1; this interaction negatively regulates the transcriptional regulatory activity of BZLF1 by preventing the formation of the BZLF1-CBP complex.

It is found in the host nucleus. Functionally, transcription factor that acts as a molecular switch to induce the transition from the latent to the lytic or productive phase of the virus cycle. Mediates the switch from the latent to the lytic cycle of infection in cells containing a highly methylated viral genome. Probably binds to silenced chromatin and recruits host chromatin-remodeling enzymes. Regulates this switch by binding to 2 types of ZEBRA response elements (ZREs): the CpG-free AP-1 like elements (latency) and the methylated CpG-containing elements (lytic replication). Activates preferentially the methylated forms of the viral lytic R (BRLF1) and Na (BRRF1) gene promoters, the latters being the first genes activated during Z-mediated reactivation in latently infected cells. BZLF1 and BRLF1 act together to trigger lytic replication. Also binds the lytic origin of replication, oriLyt. Induces G1 cell cycle arrest by stabilizing the host CCAAT/enhancer binding protein CEBPA. This function is important because the lytic cycle preferentially takes place in host cells arrested in G1. The sequence is that of Lytic switch protein BZLF1 from Epstein-Barr virus (strain B95-8) (HHV-4).